We begin with the raw amino-acid sequence, 323 residues long: Acetyl esterase (323 aa).

The Involved in the stabilization of the negatively charged intermediate by the formation of the oxyanion hole signature appears at 91–93 (HGG). Residues Ser165, Asp262, and His292 contribute to the active site.

This sequence belongs to the 'GDXG' lipolytic enzyme family. Homodimer. Interacts with MalT and MelA.

Its subcellular location is the cytoplasm. In terms of biological role, displays esterase activity towards short chain fatty esters (acyl chain length of up to 8 carbons). Able to hydrolyze triacetylglycerol (triacetin) and tributyrylglycerol (tributyrin), but not trioleylglycerol (triolein) or cholesterol oleate. Negatively regulates MalT activity by antagonizing maltotriose binding. Inhibits MelA galactosidase activity. In Salmonella agona (strain SL483), this protein is Acetyl esterase.